Consider the following 427-residue polypeptide: UDP-N-acetylglucosamine 1-carboxyvinyltransferase (427 aa).

Residue 22–23 (KN) participates in phosphoenolpyruvate binding. Residue R99 coordinates UDP-N-acetyl-alpha-D-glucosamine. C123 acts as the Proton donor in catalysis. A 2-(S-cysteinyl)pyruvic acid O-phosphothioketal modification is found at C123. UDP-N-acetyl-alpha-D-glucosamine is bound by residues 128–132 (RPIDL), D313, and I335.

Belongs to the EPSP synthase family. MurA subfamily.

The protein localises to the cytoplasm. The catalysed reaction is phosphoenolpyruvate + UDP-N-acetyl-alpha-D-glucosamine = UDP-N-acetyl-3-O-(1-carboxyvinyl)-alpha-D-glucosamine + phosphate. The protein operates within cell wall biogenesis; peptidoglycan biosynthesis. Cell wall formation. Adds enolpyruvyl to UDP-N-acetylglucosamine. The protein is UDP-N-acetylglucosamine 1-carboxyvinyltransferase of Novosphingobium aromaticivorans (strain ATCC 700278 / DSM 12444 / CCUG 56034 / CIP 105152 / NBRC 16084 / F199).